Consider the following 78-residue polypeptide: MICPRCADEQIEVMAKSPVKDVWTVYQCQHCLYTWRDTEPLRRTSREHYPEAFRMTQKDIDDAPMVPSIPPLLAEGKR.

Its function is as follows. Involved in the non-oxidative decarboxylation and detoxification of phenolic derivatives under anaerobic conditions, however the precise biochemical function in metabolism of phenolic acid is unknown. The chain is Protein EcdD from Escherichia coli O157:H7.